Here is a 703-residue protein sequence, read N- to C-terminus: Stonustoxin subunit alpha (703 aa).

Residues 2 to 265 (SSDLVMPALG…KAQQLIQEIN (264 aa)) are structural MACPF/CDC pore-forming domain. The structural FAT domain stretch occupies residues 266–385 (VSKVRRIHTT…GMVEGTQAKF (120 aa)). The thioredoxin (THX) domain stretch occupies residues 386–517 (VSNQTELDRE…PRMPFVQGYK (132 aa)). Positions 508 to 703 (PRMPFVQGYK…AGNHGTLRLL (196 aa)) constitute a B30.2/SPRY domain.

This sequence belongs to the SNTX/VTX toxin family. As to quaternary structure, heterodimer of alpha and beta subunits; non-covalently linked. Post-translationally, intrachain disulfide bonds may be present in the heterodimer. Not glycosylated. As to expression, expressed by the venom gland.

It localises to the secreted. In terms of biological role, this lethal (towards mammals) heterodimer induces hemolytic activities due to its ability to form pores in the cell membrane. The pore may be composed of 10 SNTX-alpha/beta heterodimers. The toxin elicits potent hypotension which is endothelium-dependent and appears to be mediated by the nitric oxide pathway and activation of potassium channels. In addition, it displays edema-inducing activities, increases vascular permeability. It also shows myotoxic activities and interferes irreversibly with neuromuscular function. It also induces irreversible platelet aggregation in rabbit or rat (but not in human or mouse) whole blood. In addition, it has been observed to increase spontaneous quantal acetylcholine release from isolated frog cutaneous pectoris motor endings. This chain is Stonustoxin subunit alpha, found in Synanceia horrida (Estuarine stonefish).